Reading from the N-terminus, the 605-residue chain is Protein Spindly (605 aa).

Methionine 1 carries the post-translational modification N-acetylmethionine. Residues 3–442 (TDIVINLRCK…ELKLKYEPEE (440 aa)) are a coiled coil. Residues serine 513, serine 515, and serine 555 each carry the phosphoserine modification. The interval 545-581 (LSERSGNTLNSPRLAAESKLQTEVKEGKETASKLEKE) is disordered. Basic and acidic residues predominate over residues 564–581 (LQTEVKEGKETASKLEKE).

This sequence belongs to the Spindly family. Interacts with KNTC1 and ZW10. These interactions appear weak and may be transient or indirect. Interacts with dynein intermediate chain and dynactin (DCTN1). Interacts with the catalytically active form of USP45. Monoubiquitinated with'Lys-48' linkage. Deubiquitinated by USP45.

Its subcellular location is the cytoplasm. It localises to the cytoskeleton. It is found in the microtubule organizing center. The protein localises to the centrosome. The protein resides in the chromosome. Its subcellular location is the centromere. It localises to the kinetochore. It is found in the nucleus. The protein localises to the spindle pole. In terms of biological role, required for the localization of dynein and dynactin to the mitotic kintochore. Dynein is believed to control the initial lateral interaction between the kinetochore and spindle microtubules and to facilitate the subsequent formation of end-on kinetochore-microtubule attachments mediated by the NDC80 complex. Also required for correct spindle orientation. Does not appear to be required for the removal of spindle assembly checkpoint (SAC) proteins from the kinetochore upon bipolar spindle attachment. Acts as an adapter protein linking the dynein motor complex to various cargos and converts dynein from a non-processive to a highly processive motor in the presence of dynactin. Facilitates the interaction between dynein and dynactin and activates dynein processivity (the ability to move along a microtubule for a long distance without falling off the track). Plays a role in cell migration. This is Protein Spindly from Macaca fascicularis (Crab-eating macaque).